We begin with the raw amino-acid sequence, 80 residues long: RNA-binding protein KhpA (80 aa).

Residues 33-80 form the KH domain; sequence GRTVEVHVHPDDLGKVIGRGGRTATALRKLVAGIGGRGIRVDVVDTDQ.

The protein belongs to the KhpA RNA-binding protein family.

Its subcellular location is the cytoplasm. Functionally, a probable RNA-binding protein. The protein is RNA-binding protein KhpA of Mycobacterium leprae (strain TN).